A 314-amino-acid polypeptide reads, in one-letter code: Deoxymugineic acid synthase 1-B (314 aa).

A disordered region spans residues Met1–Gly22. Asp44 lines the NADP(+) pocket. Tyr49 acts as the Proton donor in catalysis. Substrate is bound at residue His112. NADP(+) is bound by residues Ala158–Asn159, Gln180, Phe258–Asn266, and Glu273–Arg281.

It belongs to the aldo/keto reductase family. As to expression, mostly expressed in root tissues, observed in mesocotyl and embryonic roots, seedling roots, crown and seedling leafes, mature bracts, anthers, pistil, caryopsis and embryos.

It carries out the reaction 2'-deoxymugineate + NAD(+) = 3''-deamino-3''-oxonicotianamine + NADH + H(+). It catalyses the reaction 2'-deoxymugineate + NADP(+) = 3''-deamino-3''-oxonicotianamine + NADPH + H(+). It participates in siderophore biosynthesis. Catalyzes the reduction of a 3''-keto intermediate during the biosynthesis of 2'-deoxymugineic acid (DMA) from L-Met. Involved in the formation of phytosiderophores (MAs) belonging to the mugineic acid family and required to acquire iron. The sequence is that of Deoxymugineic acid synthase 1-B from Triticum aestivum (Wheat).